A 349-amino-acid chain; its full sequence is Small ribosomal subunit biogenesis GTPase RsgA 2 (349 aa).

In terms of domain architecture, CP-type G spans 97-252; it reads AEQLIATNVD…IIDTPGMREL (156 aa). Residues 142–145 and 194–202 each bind GTP; these read TKAD and GSSGVGKST. Positions 275, 280, 282, and 288 each coordinate Zn(2+).

Belongs to the TRAFAC class YlqF/YawG GTPase family. RsgA subfamily. Monomer. Associates with 30S ribosomal subunit, binds 16S rRNA. It depends on Zn(2+) as a cofactor.

The protein localises to the cytoplasm. One of several proteins that assist in the late maturation steps of the functional core of the 30S ribosomal subunit. Helps release RbfA from mature subunits. May play a role in the assembly of ribosomal proteins into the subunit. Circularly permuted GTPase that catalyzes slow GTP hydrolysis, GTPase activity is stimulated by the 30S ribosomal subunit. This chain is Small ribosomal subunit biogenesis GTPase RsgA 2, found in Vibrio vulnificus (strain CMCP6).